We begin with the raw amino-acid sequence, 180 residues long: Putative manganese efflux pump MntP (180 aa).

Helical transmembrane passes span 4-24 (FVTI…VALG), 40-60 (LTIG…GKWL), 64-84 (FDVI…VQMA), 103-123 (LLLF…SFGI), 129-149 (FVTV…GLIV), and 156-176 (FLGA…GLKI).

Belongs to the MntP (TC 9.B.29) family.

Its subcellular location is the cell membrane. Its function is as follows. Probably functions as a manganese efflux pump. In Shouchella clausii (strain KSM-K16) (Alkalihalobacillus clausii), this protein is Putative manganese efflux pump MntP.